Here is a 381-residue protein sequence, read N- to C-terminus: Spindlin interactor and repressor of chromatin-binding protein (381 aa).

The interval 42–73 (RVTQQEKTPPPRPSPLEAGSDGCEEPKQQVSW) is disordered. Lys48 is covalently cross-linked (Glycyl lysine isopeptide (Lys-Gly) (interchain with G-Cter in SUMO2)). 2 positions are modified to phosphoserine: Ser121 and Ser148. 3 disordered regions span residues 144 to 264 (AEQP…EVRH), 283 to 320 (QLRG…LRGT), and 339 to 381 (LQDW…GNGV). Residues Lys189 and Lys220 each participate in a glycyl lysine isopeptide (Lys-Gly) (interchain with G-Cter in SUMO2) cross-link. Over residues 218-228 (RWKEPPGEEPV) the composition is skewed to basic and acidic residues. Residues Ser248 and Ser251 each carry the phosphoserine modification. The span at 287-299 (PDSKDSPKDREVA) shows a compositional bias: basic and acidic residues. Residues Lys290 and Lys294 each participate in a glycyl lysine isopeptide (Lys-Gly) (interchain with G-Cter in SUMO2) cross-link. Phosphoserine is present on residues Ser308 and Ser310. Lys374 is covalently cross-linked (Glycyl lysine isopeptide (Lys-Gly) (interchain with G-Cter in SUMO2)).

In terms of assembly, interacts with SPIN1, SPIN2A, SPIN2B, SPIN3 and SPIN4. Interacts with TCF7L2 in a SPIN1-dependent manner. Interacts with PARP1; promoting PARP1 ADP-ribosyltransferase activity.

It is found in the nucleus. The protein resides in the chromosome. Functionally, chromatin protein that stabilizes SPIN1 and enhances its association with histone H3 trimethylated at both 'Lys-4' and 'Lys-9' (H3K4me3K9me3). Positively regulates poly-ADP-ribosylation in response to DNA damage; acts by facilitating PARP1 ADP-ribosyltransferase activity. In Homo sapiens (Human), this protein is Spindlin interactor and repressor of chromatin-binding protein.